We begin with the raw amino-acid sequence, 429 residues long: Glutamate-1-semialdehyde 2,1-aminomutase (429 aa).

Lysine 267 carries the post-translational modification N6-(pyridoxal phosphate)lysine.

It belongs to the class-III pyridoxal-phosphate-dependent aminotransferase family. HemL subfamily. In terms of assembly, homodimer. It depends on pyridoxal 5'-phosphate as a cofactor.

It is found in the cytoplasm. It carries out the reaction (S)-4-amino-5-oxopentanoate = 5-aminolevulinate. Its pathway is porphyrin-containing compound metabolism; protoporphyrin-IX biosynthesis; 5-aminolevulinate from L-glutamyl-tRNA(Glu): step 2/2. This Xanthomonas campestris pv. campestris (strain 8004) protein is Glutamate-1-semialdehyde 2,1-aminomutase.